The primary structure comprises 380 residues: MADDKEMPAAVVDGHDQVTGHIISTTIGGKNGEPKQTISYMAERVVGTGSFGIVFQAKCLETGETVAIKKVLQDRRYKNRELQLMRVMDHPNVVCLKHCFFSTTSKDELFLNLVMEYVPESLYRVLKHYSSANQRMPLVYVKLYMYQIFRGLAYIHNVAGVCHRDLKPQNLLVDPLTHQVKICDFGSAKQLVKGEANISYICSRFYRAPELIFGATEYTTSIDIWSAGCVLAELLLGQPLFPGENAVDQLVEIIKVLGTPTREEIRCMNPHYTDFRFPQIKAHPWHKIFHKRMPPEAIDFASRLLQYSPSLRCTALEACAHPFFDELREPNARLPNGRPFPPLFNFKQEVAGSSPELVNKLIPDHIKRQLGLSFLNQSGT.

In terms of domain architecture, Protein kinase spans 40 to 324 (YMAERVVGTG…ALEACAHPFF (285 aa)). ATP contacts are provided by residues 46-54 (VGTGSFGIV) and Lys69. Thr104 is subject to Phosphothreonine. A Phosphoserine modification is found at Ser105. Asp165 acts as the Proton acceptor in catalysis. Ser187 carries the phosphoserine modification. Tyr200 carries the post-translational modification Phosphotyrosine. Residues Thr220 and Thr261 each carry the phosphothreonine modification. Ser310 bears the Phosphoserine mark. A Phosphothreonine modification is found at Thr314. Residue Ser353 is modified to Phosphoserine.

This sequence belongs to the protein kinase superfamily. CMGC Ser/Thr protein kinase family. GSK-3 subfamily. In terms of assembly, interacts in vitro with the C-terminal fragment of BZR1 and with BES1/BZR2, but not through the kinase domain. Interacts with BHLH150, beet curly top virus AL4/C4 and tomato golden mosaic virus AL4/AC4. Interacts with YDA. Interacts with MKK4. Interacts with KIB1 and KIB2 in a brassinosteroid (BR)-dependent manner. Interacts with BSK1, BSK6, BSK8 and BSK11. Binds to WRKY46, WRKY54 and WRKY70. Component of a complex made of POLAR, BASL, ASK7/BIN2 and ASK3/SK12. Binds to POLAR and BASL. Autophosphorylated mainly on threonine and serine residues. Post-translationally, ubiquitination and subsequent proteasomal degradation mediated by KIB1. As to expression, in the two outer cell layers of the developing seed coat and restricted to the suspensor cells in developing embryos. Mostly expressed in stomatal lineage cells with asymmetric cell division (ACD) potential. Observed in small cells of non-protruding hypocotyl cell files and of developing cotyledon epidermis.

The protein localises to the cytoplasm. It is found in the cell cortex. Its subcellular location is the nucleus. It localises to the cell membrane. The enzyme catalyses L-seryl-[protein] + ATP = O-phospho-L-seryl-[protein] + ADP + H(+). It carries out the reaction L-threonyl-[protein] + ATP = O-phospho-L-threonyl-[protein] + ADP + H(+). With respect to regulation, inactivated by an unknown mechanism after binding of brassinosteroids to the brassinosteroid receptor complex. Inhibited by lithium. Inhibited by dephosphorylation at Tyr-200 by BSU1. Competitive inhibition by KIB1 that reduces substrate (e.g. BZR1) access. Repressed by bikinin. Functionally, negative regulator in brassinosteroid signal transduction pathway important for plant growth. May be also involved in auxin signaling pathway. Phosphorylates and increases the degradation of BZR1 and BZR2/BES1 by the proteasome. Phosphorylates BHLH150, beet curly top virus C4 and tomato golden mosaic virus AC4 on threonine and serine residues. Upon brassinosteroid signaling, inhibits stomatal development by phosphorylating and inhibiting the MAPKK kinase YDA and the MAPK kinases MKK4 and MKK5. Phosphorylates BSK1, BSK3, BSK5, BSK6, BSK8 and BSK11 in vitro. Phoyphorylates and destabilizes WRKY46, WRKY54 and WRKY70. Mediates BASL nuclear exclusion; kinase activity is required for this function. Required first at the cortical polarity site, to restrict MAPK signaling and promote asymmetric cell division (ACD), and second in the nucleus of stomatal lineage ground cells (SLGCs) or meristemoids, to limit cell division and to promote differentiation into pavement or stomatal guard cells, respectively, likely by initiating BASL polarization. Phosphorylates BASL, YDA and SPCH in vitro and POLAR in vivo. Phosphorylates and inhibits SPCH in the nucleus of SLGC undergoing ACD, thus negatively regulating stomatal development. This is Shaggy-related protein kinase eta from Arabidopsis thaliana (Mouse-ear cress).